A 644-amino-acid polypeptide reads, in one-letter code: Exoribonuclease 2 (644 aa).

Positions 189–516 (REDLTALDFV…NHRLLKAVIK (328 aa)) constitute an RNB domain. The S1 motif domain maps to 561–643 (DTRFAAEIVD…ETRSIIARPV (83 aa)).

It belongs to the RNR ribonuclease family. RNase II subfamily.

It localises to the cytoplasm. It catalyses the reaction Exonucleolytic cleavage in the 3'- to 5'-direction to yield nucleoside 5'-phosphates.. Involved in mRNA degradation. Hydrolyzes single-stranded polyribonucleotides processively in the 3' to 5' direction. In Shigella boydii serotype 18 (strain CDC 3083-94 / BS512), this protein is Exoribonuclease 2.